The following is a 444-amino-acid chain: UDP-N-acetylmuramate--L-alanine ligase (444 aa).

An ATP-binding site is contributed by 111–117; it reads GAHGKTS.

It belongs to the MurCDEF family.

The protein resides in the cytoplasm. It carries out the reaction UDP-N-acetyl-alpha-D-muramate + L-alanine + ATP = UDP-N-acetyl-alpha-D-muramoyl-L-alanine + ADP + phosphate + H(+). The protein operates within cell wall biogenesis; peptidoglycan biosynthesis. In terms of biological role, cell wall formation. This chain is UDP-N-acetylmuramate--L-alanine ligase, found in Leuconostoc mesenteroides subsp. mesenteroides (strain ATCC 8293 / DSM 20343 / BCRC 11652 / CCM 1803 / JCM 6124 / NCDO 523 / NBRC 100496 / NCIMB 8023 / NCTC 12954 / NRRL B-1118 / 37Y).